The sequence spans 76 residues: Theta defensin subunit B (76 aa).

The signal sequence occupies residues 1–22 (MRTFALLTAMLLLVALQPQAEA). Residues 23-64 (RQARADEAAAQQQPGADDQGMAHSFTRPENAALPLSESAKGL) constitute a propeptide that is removed on maturation. Residues 24–54 (QARADEAAAQQQPGADDQGMAHSFTRPENAA) form a disordered region. A compositionally biased stretch (low complexity) spans 30–44 (AAAQQQPGADDQGMA). A Cyclopeptide (Arg-Cys) (interchain with C-73 in subunit A); in form BTD-1 cross-link involves residue R65. A Cyclopeptide (Arg-Cys) (interchain with C-73 in subunit B); in form BTD-2 cross-link involves residue R65. C68 and C73 form a disulfide bridge. Residue C73 forms a Cyclopeptide (Cys-Arg) (interchain with R-65 in subunit A); in form BTD-1 linkage. A Cyclopeptide (Cys-Arg) (interchain with R-65 in subunit B); in form BTD-2 cross-link involves residue C73. The propeptide occupies 74 to 76 (QLL).

Belongs to the alpha-defensin family. Theta subfamily. In terms of assembly, BTD-1 is a cyclic heterodimer composed of subunits A and B; disulfide-linked. BTD-2 is a cyclic homodimer composed of two subunits B; disulfide-linked. In terms of processing, forms a cyclic peptide with subunit A (BTD-1), or subunit B (BTD-2). An additional intersubunit disulfide bond is formed.

In terms of biological role, BTD-1 and BTD-2 have antimicrobial activity against the Gram-negative bacterium E.coli ML35, the Gram-positive bacterium S.aureus 502a, and the fungus C.albicans 16820. BTD-2 is more effective against E.coli than BTD-1. This is Theta defensin subunit B (BTDB) from Papio anubis (Olive baboon).